We begin with the raw amino-acid sequence, 158 residues long: Putative 4-hydroxy-4-methyl-2-oxoglutarate aldolase (158 aa).

Residues 75 to 78 (GDLI) and Arg-97 contribute to the substrate site. A divalent metal cation is bound at residue Asp-98.

It belongs to the class II aldolase/RraA-like family. In terms of assembly, homotrimer. A divalent metal cation is required as a cofactor.

The enzyme catalyses 4-hydroxy-4-methyl-2-oxoglutarate = 2 pyruvate. The catalysed reaction is oxaloacetate + H(+) = pyruvate + CO2. Its function is as follows. Catalyzes the aldol cleavage of 4-hydroxy-4-methyl-2-oxoglutarate (HMG) into 2 molecules of pyruvate. Also contains a secondary oxaloacetate (OAA) decarboxylase activity due to the common pyruvate enolate transition state formed following C-C bond cleavage in the retro-aldol and decarboxylation reactions. The sequence is that of Putative 4-hydroxy-4-methyl-2-oxoglutarate aldolase from Saccharopolyspora erythraea (strain ATCC 11635 / DSM 40517 / JCM 4748 / NBRC 13426 / NCIMB 8594 / NRRL 2338).